The sequence spans 305 residues: Olfactory receptor 5M11 (305 aa).

At 1–25 the chain is on the extracellular side; sequence MSNTNGSAITEFILLGLTDCPELQS. A glycan (N-linked (GlcNAc...) asparagine) is linked at N5. Residues 26–46 form a helical membrane-spanning segment; the sequence is LLFVLFLVVYLVTLLGNLGMI. Topologically, residues 47-54 are cytoplasmic; sequence MLMRLDSR. Residues 55–75 form a helical membrane-spanning segment; the sequence is LHTPMYFFLTNLAFVDLCYTS. Over 76 to 98 the chain is Extracellular; the sequence is NATPQMSTNIVSEKTISFAGCFT. An intrachain disulfide couples C96 to C188. A helical transmembrane segment spans residues 99-119; that stretch reads QCYIFIALLLTEFYMLAAMAY. Residues 120 to 138 are Cytoplasmic-facing; sequence DRYVAIYDPLRYSVKTSRR. Residues 139-159 form a helical membrane-spanning segment; sequence VCICLATFPYVYGFSDGLFQA. Residues 160 to 195 are Extracellular-facing; it reads ILTFRLTFCRSSVINHFYCADPPLIKLSCSDTYVKE. The helical transmembrane segment at 196–216 threads the bilayer; it reads HAMFISAGFNLSSSLTIVLVS. The Cytoplasmic segment spans residues 217-236; it reads YAFILAAILRIKSAEGRHKA. A helical membrane pass occupies residues 237 to 257; it reads FSTCGSHMMAVTLFYGTLFCM. Residues 258–270 lie on the Extracellular side of the membrane; it reads YIRPPTDKTVEES. A helical membrane pass occupies residues 271 to 291; the sequence is KIIAVFYTFVSPVLNPLIYSL. Residues 292–305 lie on the Cytoplasmic side of the membrane; the sequence is RNKDVKQALKNVLR.

The protein belongs to the G-protein coupled receptor 1 family.

Its subcellular location is the cell membrane. In terms of biological role, odorant receptor. This Homo sapiens (Human) protein is Olfactory receptor 5M11 (OR5M11).